The following is a 240-amino-acid chain: 2,3,4,5-tetrahydropyridine-2,6-dicarboxylate N-acetyltransferase (240 aa).

It belongs to the transferase hexapeptide repeat family. DapH subfamily.

The enzyme catalyses (S)-2,3,4,5-tetrahydrodipicolinate + acetyl-CoA + H2O = L-2-acetamido-6-oxoheptanedioate + CoA. The protein operates within amino-acid biosynthesis; L-lysine biosynthesis via DAP pathway; LL-2,6-diaminopimelate from (S)-tetrahydrodipicolinate (acetylase route): step 1/3. Catalyzes the transfer of an acetyl group from acetyl-CoA to tetrahydrodipicolinate. The sequence is that of 2,3,4,5-tetrahydropyridine-2,6-dicarboxylate N-acetyltransferase from Staphylococcus epidermidis (strain ATCC 35984 / DSM 28319 / BCRC 17069 / CCUG 31568 / BM 3577 / RP62A).